The sequence spans 663 residues: Polyunsaturated fatty acid lipoxygenase ALOX15 (663 aa).

A PLAT domain is found at 2–115; the sequence is GVYRIRVSTG…ILNLPEGTGC (114 aa). The region spanning 116–663 is the Lipoxygenase domain; it reads TVVEDSQGLF…PSLVENSVAI (548 aa). Residues H361, H366, H541, H545, and I663 each contribute to the Fe cation site.

It belongs to the lipoxygenase family. As to quaternary structure, interacts with PEBP1; in response to IL13/interleukin-13, prevents the interaction of PEBP1 with RAF1 to activate the ERK signaling cascade. Requires Fe cation as cofactor. In terms of tissue distribution, found in pituitary and pineal glands as well as leukocytes, kidney, aorta, small intestine and cornea. Also expressed by resident peritoneal macrophages (at protein level).

It localises to the cytoplasm. It is found in the cytosol. Its subcellular location is the cell membrane. The protein resides in the lipid droplet. The enzyme catalyses (5Z,8Z,11Z,14Z)-eicosatetraenoate + O2 = (12S)-hydroperoxy-(5Z,8Z,10E,14Z)-eicosatetraenoate. It carries out the reaction (5Z,8Z,11Z,14Z)-eicosatetraenoate + O2 = (15S)-hydroperoxy-(5Z,8Z,11Z,13E)-eicosatetraenoate. It catalyses the reaction (9Z,12Z)-octadecadienoate + O2 = (13S)-hydroperoxy-(9Z,11E)-octadecadienoate. The catalysed reaction is (5Z,8Z,11Z,14Z)-eicosatetraenoate + 2 O2 = (14R,15S)-dihydroperoxy-(5Z,8Z,10E,12E)-eicosatetraenoate. The enzyme catalyses (5Z,8Z,11Z,14Z)-eicosatetraenoate + 2 O2 = (8S,15S)-dihydroperoxy-(5Z,9E,11Z,13E)-eicosatetraenoate. It carries out the reaction (14S,15R)-epoxy-(5Z,8Z,11Z)-eicosatrienoate + O2 = (8S)-hydroperoxy-(14S,15R)-epoxy-(5Z,9E,11Z)-eicosatrienoate. It catalyses the reaction (14S,15R)-epoxy-(5Z,8Z,11Z)-eicosatrienoate + O2 = (12S)-hydroperoxy-(14S,15R)-epoxy-(5Z,8Z,10E)-eicosatrienoate. The catalysed reaction is (14R,15S)-epoxy-(5Z,8Z,11Z)-eicosatrienoate + O2 = (5S)-hydroperoxy-(14R,15S)-epoxy-(6E,8Z,11Z)-eicosatrienoate. The enzyme catalyses (14R,15S)-epoxy-(5Z,8Z,11Z)-eicosatrienoate + O2 = (12S)-hydroperoxy-(14R,15S)-epoxy-(5Z,8Z,10E)-eicosatrienoate. It carries out the reaction (15R)-hydroperoxy-(5Z,8Z,11Z,13E)-eicosatetraenoate = 15-oxo-(5Z,8Z,11Z,13E)-eicosatetraenoate + H2O. It catalyses the reaction (15S)-hydroperoxy-(5Z,8Z,11Z,13E)-eicosatetraenoate = (14S,15S)-epoxy-(5Z,8Z,10E,12E)-eicosatetraenoate + H2O. The catalysed reaction is (12S)-hydroperoxy-(5Z,8Z,10E,14Z)-eicosatetraenoate = (8S)-hydroxy-(11S,12S)-epoxy-(5Z,9E,14Z)-eicosatrienoate. The enzyme catalyses (4Z,7Z,10Z,13Z,16Z)-docosapentaenoate + O2 = 14-hydroperoxy-(4Z,7Z,10Z,12E,16Z)-docosapentaenoate. It carries out the reaction (7Z,10Z,13Z,16Z,19Z)-docosapentaenoate + O2 = 14-hydroperoxy-(7Z,10Z,12E,16Z,19Z)-docosapentaenoate. It catalyses the reaction (4Z,7Z,10Z,13Z,16Z,19Z)-docosahexaenoate + O2 = (14S)-hydroperoxy-(4Z,7Z,10Z,12E,16Z,19Z)-docosahexaenoate. The catalysed reaction is (4Z,7Z,10Z,13Z,16Z,19Z)-docosahexaenoate + O2 = (17S)-hydroperoxy-(4Z,7Z,10Z,13Z,15E,19Z)-docosahexaenoate. The enzyme catalyses (7S)-hydroperoxy-(4Z,8E,10Z,13Z,16Z,19Z)-docosahexaenoate + O2 = (7S,14S)-dihydroperoxy-(4Z,8E,10Z,12E,16Z,19Z)-docosahexaenoate. It carries out the reaction (7S)-hydroperoxy-(4Z,8E,10Z,13Z,16Z,19Z)-docosahexaenoate + O2 = (7S,17S)-dihydroperoxy-(4Z,8E,10Z,13Z,15E,19Z)-docosahexaenoate. It catalyses the reaction (4Z,7Z,10Z,13Z,16Z,19Z)-docosahexaenoate + O2 = (11S)-hydroperoxy-(4Z,7Z,9E,13Z,16Z,19Z)-docosahexaenoate. The catalysed reaction is N-(5Z,8Z,11Z,14Z)-eicosatetraenoyl-taurine + O2 = N-(12S)-hydroperoxy-(5Z,8Z,10E,14Z)-eicosatetraenoyl-taurine. The enzyme catalyses N-(5Z,8Z,11Z,14Z)-eicosatetraenoyl-gamma-aminobutanoate + O2 = N-(12S)-hydroperoxy-(5Z,8Z,10E,14Z)-eicosatetraenoyl-gamma-aminobutanoate. It carries out the reaction N-(5Z,8Z,11Z,14Z)-eicosatetraenoyl-glycine + O2 = N-(12S)-hydroperoxy-(5Z,8Z,10E,14Z)-eicosatetraenoyl-glycine. It catalyses the reaction N-(5Z,8Z,11Z,14Z)-eicosatetraenoyl-L-alanine + O2 = N-(12S)-hydroperoxy-(5Z,8Z,10E,14Z)-eicosatetraenoyl-alanine. The catalysed reaction is N-(5Z,8Z,11Z,14Z)-eicosatetraenoyl-taurine + O2 = N-(15S)-hydroperoxy-(5Z,8Z,11Z,13E)-eicosatetraenoyl-taurine. The enzyme catalyses N-(5Z,8Z,11Z,14Z)-eicosatetraenoyl-gamma-aminobutanoate + O2 = N-(15S)-hydroperoxy-(5Z,8Z,11Z,13E)-eicosatetraenoyl-gamma-aminobutanoate. It carries out the reaction N-(5Z,8Z,11Z,14Z)-eicosatetraenoyl-glycine + O2 = N-(15S)-hydroperoxy-(5Z,8Z,11Z,13E)-eicosatetraenoyl-glycine. It catalyses the reaction N-(5Z,8Z,11Z,14Z)-eicosatetraenoyl-L-alanine + O2 = N-(15S)-hydroperoxy-(5Z,8Z,11Z,13E)-eicosatetraenoyl-alanine. It participates in lipid metabolism; hydroperoxy eicosatetraenoic acid biosynthesis. Its function is as follows. Non-heme iron-containing dioxygenase that catalyzes the stereo-specific peroxidation of free and esterified polyunsaturated fatty acids generating a spectrum of bioactive lipid mediators. It inserts peroxyl groups at C12 or C15 of arachidonate ((5Z,8Z,11Z,14Z)-eicosatetraenoate) producing both 12-hydroperoxyeicosatetraenoate/12-HPETE and 15-hydroperoxyeicosatetraenoate/15-HPETE. It may then act on 12-HPETE to produce hepoxilins, which may show pro-inflammatory properties. Can also peroxidize linoleate ((9Z,12Z)-octadecadienoate) to 13-hydroperoxyoctadecadienoate. May participate in the sequential oxidations of DHA ((4Z,7Z,10Z,13Z,16Z,19Z)-docosahexaenoate) to generate specialized pro-resolving mediators (SPMs)like resolvin D5 ((7S,17S)-diHPDHA) and (7S,14S)-diHPDHA, that actively down-regulate the immune response and have anti-aggregation properties with platelets. Can convert epoxy fatty acids to hydroperoxy-epoxides derivatives followed by an intramolecular nucleophilic substitution leading to the formation of monocyclic endoperoxides. Plays an important role during the maintenance of self-tolerance by peroxidizing membrane-bound phosphatidylethanolamine which can then signal the sorting process for clearance of apoptotic cells during inflammation and prevent an autoimmune response. In addition to its role in the immune and inflammatory responses, this enzyme may play a role in epithelial wound healing in the cornea through production of lipoxin A4 (LXA(4)) and docosahexaenoic acid-derived neuroprotectin D1 (NPD1; 10R,17S-HDHA), both lipid autacoids exhibit anti-inflammatory and neuroprotective properties. Furthermore, it may regulate actin polymerization which is crucial for several biological processes such as the phagocytosis of apoptotic cells. It is also implicated in the generation of endogenous ligands for peroxisome proliferator activated receptor (PPAR-gamma), hence modulating macrophage development and function. It may also exert a negative effect on skeletal development by regulating bone mass through this pathway. As well as participates in ER stress and downstream inflammation in adipocytes, pancreatic islets, and liver. Finally, it is also involved in the cellular response to IL13/interleukin-13. The protein is Polyunsaturated fatty acid lipoxygenase ALOX15 of Mus musculus (Mouse).